The primary structure comprises 121 residues: Neuromedin-B (121 aa).

The signal sequence occupies residues 1–24 (MTLRARGARLLGGLLFFTLLAAGA). At M56 the chain carries Methionine amide. The propeptide occupies 60-121 (SLEPPNPSLL…RRLLVQTLEK (62 aa)).

This sequence belongs to the bombesin/neuromedin-B/ranatensin family. In terms of tissue distribution, higher expression in the central nervous system (CNS) than in peripheral tissues. Highest levels are found in the olfactory bulb. Relatively high levels in the CNS (including the cerebral cortex, cerebellum, spinal cord, medulla oblongata, midbrain, hypothalamus, hippocampus, and hypophysis) and in peripheral tissues such as the pancreas, adrenal gland, testis, ovary and cecum. Moderate levels are found in the rectum, heart and pons with low expression levels detected in the bone marrow and duodenum. Other tissues show no or low levels of expression.

Its subcellular location is the secreted. It is found in the cell projection. It localises to the neuron projection. Stimulates smooth muscle contraction. Induces sighing by acting directly on the pre-Botzinger complex, a cluster of several thousand neurons in the ventrolateral medulla responsible for inspiration during respiratory activity. Contributes to the induction of sneezing following exposure to chemical irritants or allergens which causes release of NMB by nasal sensory neurons and activation of NMBR-expressing neurons in the sneeze-evoking region of the brainstem. These in turn activate neurons of the caudal ventral respiratory group, giving rise to the sneezing response. Contributes to induction of acute itch, possibly through activation of the NMBR receptor on dorsal root ganglion neurons. Increases expression of NMBR and steroidogenic mediators STAR, CYP11A1 and HSD3B1 in Leydig cells, induces secretion of testosterone by Leydig cells and also promotes Leydig cell proliferation. Plays a role in the innate immune response to influenza A virus infection by enhancing interferon alpha expression and reducing expression of IL6. Plays a role in CSF1-induced proliferation of osteoclast precursors by contributing to positive regulation of the expression of the CSF1 receptor CSF1R. This chain is Neuromedin-B (NMB), found in Sus scrofa (Pig).